We begin with the raw amino-acid sequence, 356 residues long: uncharacterized protein (356 aa).

Threonine 37–glycine 44 is a binding site for NADP(+). Residue serine 168 participates in substrate binding. The active-site Proton acceptor is tyrosine 181.

This sequence belongs to the short-chain dehydrogenases/reductases (SDR) family.

This is an uncharacterized protein from Bacillus subtilis (strain 168).